The chain runs to 103 residues: Large ribosomal subunit protein bL21 (103 aa).

It belongs to the bacterial ribosomal protein bL21 family. Part of the 50S ribosomal subunit. Contacts protein L20.

Its function is as follows. This protein binds to 23S rRNA in the presence of protein L20. The protein is Large ribosomal subunit protein bL21 of Actinobacillus succinogenes (strain ATCC 55618 / DSM 22257 / CCUG 43843 / 130Z).